The following is a 382-amino-acid chain: Alpha-methylacyl-CoA racemase (382 aa).

Substrate-binding positions include arginine 36 and 55-58 (LDLK). N6-acetyllysine is present on lysine 58. Lysine 87 is modified (N6-acetyllysine; alternate). At lysine 87 the chain carries N6-succinyllysine; alternate. 121–126 (GHDINY) contacts substrate. Histidine 122 acts as the Proton acceptor in catalysis. Aspartate 152 functions as the Proton donor in the catalytic mechanism. Lysine 268 is subject to N6-succinyllysine. Positions 380 to 382 (ASL) match the Microbody targeting signal motif.

It belongs to the CoA-transferase III family. Monomer.

The protein resides in the peroxisome. The protein localises to the mitochondrion. It catalyses the reaction a (2S)-2-methylacyl-CoA = a (2R)-2-methylacyl-CoA. The enzyme catalyses (25R)-3alpha,7alpha,12alpha-trihydroxy-5beta-cholestan-26-oyl-CoA = (25S)-3alpha,7alpha,12alpha-trihydroxy-5beta-cholestan-26-oyl-CoA. The catalysed reaction is (2R,6)-dimethylheptanoyl-CoA = (2S,6)-dimethylheptanoyl-CoA. Its pathway is lipid metabolism; bile acid biosynthesis. The protein operates within lipid metabolism; fatty acid metabolism. Its function is as follows. Catalyzes the interconversion of (R)- and (S)-stereoisomers of alpha-methyl-branched-chain fatty acyl-CoA esters. Acts only on coenzyme A thioesters, not on free fatty acids, and accepts as substrates a wide range of alpha-methylacyl-CoAs, including pristanoyl-CoA, trihydroxycoprostanoyl-CoA (an intermediate in bile acid synthesis), and arylpropionic acids like the anti-inflammatory drug ibuprofen (2-(4-isobutylphenyl)propionic acid) but neither 3-methyl-branched nor linear-chain acyl-CoAs. This is Alpha-methylacyl-CoA racemase (AMACR) from Homo sapiens (Human).